Here is a 463-residue protein sequence, read N- to C-terminus: Ribosomal protein uS12 methylthiotransferase RimO (463 aa).

An MTTase N-terminal domain is found at 15-130 (PKVGFVSLGC…VMQAVHSHLP (116 aa)). Residues Cys-24, Cys-60, Cys-89, Cys-161, Cys-165, and Cys-168 each coordinate [4Fe-4S] cluster. The Radical SAM core domain maps to 147-392 (LTPRHYAYLK…MEVAEQVSAK (246 aa)). The TRAM domain maps to 395–463 (ARKVGKTLKV…ADGHDLWGEV (69 aa)).

Belongs to the methylthiotransferase family. RimO subfamily. It depends on [4Fe-4S] cluster as a cofactor.

Its subcellular location is the cytoplasm. It carries out the reaction L-aspartate(89)-[ribosomal protein uS12]-hydrogen + (sulfur carrier)-SH + AH2 + 2 S-adenosyl-L-methionine = 3-methylsulfanyl-L-aspartate(89)-[ribosomal protein uS12]-hydrogen + (sulfur carrier)-H + 5'-deoxyadenosine + L-methionine + A + S-adenosyl-L-homocysteine + 2 H(+). Catalyzes the methylthiolation of an aspartic acid residue of ribosomal protein uS12. This is Ribosomal protein uS12 methylthiotransferase RimO from Paraburkholderia phymatum (strain DSM 17167 / CIP 108236 / LMG 21445 / STM815) (Burkholderia phymatum).